The primary structure comprises 440 residues: Frizzled/smoothened-like sans CRD protein D (440 aa).

The first 27 residues, 1–27 (MFIILKFLISFFLICNFFNYNDHFASG), serve as a signal peptide directing secretion. Over 28–85 (QTLPPGFCPSPLIYRNSTNRQNDIENGYLFIGQTNCTSPCPSLIFSENEWHRVYNMSL) the chain is Extracellular. Asn-43, Asn-62, and Asn-82 each carry an N-linked (GlcNAc...) asparagine glycan. Residues 86 to 106 (IAGTISMFALIFLIITYSPLV) traverse the membrane as a helical segment. The Cytoplasmic segment spans residues 107 to 110 (NKYN). A helical membrane pass occupies residues 111 to 131 (GYTRHTVGILFLFCGIFLTVT). Residues 132-162 (TDGRQLWDIDLGFEKYCPEPGRFARQSDTKC) lie on the Extracellular side of the membrane. The helical transmembrane segment at 163-183 (LVTAIFFQYGCVTSILWWAAI) threads the bilayer. The Cytoplasmic portion of the chain corresponds to 184-200 (SVDLWMTIRKVKISKLQ). A helical membrane pass occupies residues 201-221 (FITYAVILNIITLILTFAPIA). Residues 222–244 (SKQYGYGEAAIGCWLMDLKYQVG) are Extracellular-facing. The chain crosses the membrane as a helical span at residues 245–265 (YFWAPVGFCLCVGCVSIVLII). The Cytoplasmic segment spans residues 266 to 285 (REIYKVSDAIKKKLLAKHLK). The helical transmembrane segment at 286 to 306 (PLMLIILMLSEFIYMFIFYSY) threads the bilayer. Residues 307 to 346 (TTSRRGHYHDVVEKYIRCLFINASNPSICEVDVSISSPAH) lie on the Extracellular side of the membrane. A glycan (N-linked (GlcNAc...) asparagine) is linked at Asn-328. Residues 347–367 (FFFHFCMRLMGIEGLIFFGFT) form a helical membrane-spanning segment. The Cytoplasmic segment spans residues 368–440 (RQTKRIWLRS…IELSGVDSKN (73 aa)). Residues 395–428 (ISSDEKTSNSSHRTTRGCRETEFGESIEQSNDPE) form a disordered region.

The protein belongs to the G-protein coupled receptor Fz/Smo family.

The protein localises to the membrane. This Dictyostelium discoideum (Social amoeba) protein is Frizzled/smoothened-like sans CRD protein D (fscD).